The sequence spans 265 residues: 3-methyl-2-oxobutanoate hydroxymethyltransferase (265 aa).

D41 and D80 together coordinate Mg(2+). 3-methyl-2-oxobutanoate is bound by residues 41-42 (DS), D80, and K109. E111 provides a ligand contact to Mg(2+). E178 functions as the Proton acceptor in the catalytic mechanism.

The protein belongs to the PanB family. Homodecamer; pentamer of dimers. Mg(2+) is required as a cofactor.

The protein localises to the cytoplasm. The catalysed reaction is 3-methyl-2-oxobutanoate + (6R)-5,10-methylene-5,6,7,8-tetrahydrofolate + H2O = 2-dehydropantoate + (6S)-5,6,7,8-tetrahydrofolate. It functions in the pathway cofactor biosynthesis; (R)-pantothenate biosynthesis; (R)-pantoate from 3-methyl-2-oxobutanoate: step 1/2. In terms of biological role, catalyzes the reversible reaction in which hydroxymethyl group from 5,10-methylenetetrahydrofolate is transferred onto alpha-ketoisovalerate to form ketopantoate. In Thermosipho africanus (strain TCF52B), this protein is 3-methyl-2-oxobutanoate hydroxymethyltransferase.